Reading from the N-terminus, the 448-residue chain is Glutamyl-tRNA reductase (448 aa).

Substrate is bound by residues 52–55 (TCNR), Ser-105, 110–112 (EDQ), and Gln-116. Cys-53 (nucleophile) is an active-site residue. 184–189 (GAGEMG) is an NADP(+) binding site. A disordered region spans residues 406–435 (DPDFGGPDQATPPEFTKGMSVEDIPDGMRD).

It belongs to the glutamyl-tRNA reductase family. Homodimer.

It carries out the reaction (S)-4-amino-5-oxopentanoate + tRNA(Glu) + NADP(+) = L-glutamyl-tRNA(Glu) + NADPH + H(+). The protein operates within porphyrin-containing compound metabolism; protoporphyrin-IX biosynthesis; 5-aminolevulinate from L-glutamyl-tRNA(Glu): step 1/2. Functionally, catalyzes the NADPH-dependent reduction of glutamyl-tRNA(Glu) to glutamate 1-semialdehyde (GSA). This is Glutamyl-tRNA reductase from Haloarcula marismortui (strain ATCC 43049 / DSM 3752 / JCM 8966 / VKM B-1809) (Halobacterium marismortui).